Reading from the N-terminus, the 173-residue chain is Co-chaperone protein HscB (173 aa).

Residues 2–74 form the J domain; that stretch reads DYFTLFGLPA…LKRAEYMLSL (73 aa).

This sequence belongs to the HscB family. Interacts with HscA and stimulates its ATPase activity. Interacts with IscU.

Co-chaperone involved in the maturation of iron-sulfur cluster-containing proteins. Seems to help targeting proteins to be folded toward HscA. This is Co-chaperone protein HscB from Photorhabdus laumondii subsp. laumondii (strain DSM 15139 / CIP 105565 / TT01) (Photorhabdus luminescens subsp. laumondii).